Reading from the N-terminus, the 506-residue chain is DEAD-box ATP-dependent RNA helicase CshA (506 aa).

The Q motif signature appears at 2 to 30; that stretch reads QNFKELGISDNTVQSLESMGFKEPTPIQK. One can recognise a Helicase ATP-binding domain in the interval 33–203; it reads IPYALQGIDI…QQFMKSPKII (171 aa). 46–53 contacts ATP; the sequence is AQTGTGKT. The short motif at 150–153 is the DEAD box element; it reads DEAD. The Helicase C-terminal domain maps to 214–375; it reads QIEEFYTIVK…LRPPHRKEVL (162 aa). The disordered stretch occupies residues 436–506; sequence EKPLSRKGRN…KGRTFADHQK (71 aa). The segment covering 468-480 has biased composition (basic residues); sequence KRSKGYSSKKKST.

This sequence belongs to the DEAD box helicase family. CshA subfamily. In terms of assembly, oligomerizes, may be a member of the RNA degradosome.

Its subcellular location is the cytoplasm. The catalysed reaction is ATP + H2O = ADP + phosphate + H(+). Its function is as follows. DEAD-box RNA helicase possibly involved in RNA degradation. Unwinds dsRNA in both 5'- and 3'-directions, has RNA-dependent ATPase activity. The polypeptide is DEAD-box ATP-dependent RNA helicase CshA (Staphylococcus aureus (strain bovine RF122 / ET3-1)).